Here is a 485-residue protein sequence, read N- to C-terminus: Glutamyl-tRNA(Gln) amidotransferase subunit A (485 aa).

Residues Lys-79 and Ser-154 each act as charge relay system in the active site. The active-site Acyl-ester intermediate is the Ser-178.

Belongs to the amidase family. GatA subfamily. As to quaternary structure, heterotrimer of A, B and C subunits.

It carries out the reaction L-glutamyl-tRNA(Gln) + L-glutamine + ATP + H2O = L-glutaminyl-tRNA(Gln) + L-glutamate + ADP + phosphate + H(+). In terms of biological role, allows the formation of correctly charged Gln-tRNA(Gln) through the transamidation of misacylated Glu-tRNA(Gln) in organisms which lack glutaminyl-tRNA synthetase. The reaction takes place in the presence of glutamine and ATP through an activated gamma-phospho-Glu-tRNA(Gln). This is Glutamyl-tRNA(Gln) amidotransferase subunit A from Staphylococcus carnosus (strain TM300).